We begin with the raw amino-acid sequence, 167 residues long: NADH-ubiquinone oxidoreductase chain 6 (167 aa).

Transmembrane regions (helical) follow at residues 1-21, 27-47, 50-70, 88-108, and 143-163; these read MKMMVVFLFSILLVFGFVAFA, VYGGLSLVVSGGLGCAIVVSL, VFLGLIVFLIYLGGMLVVFGY, VALSMLLFTVIVESAWYLMSG, and WALVLLGWILFITIYVVLEVV.

The protein belongs to the complex I subunit 6 family. In terms of assembly, core subunit of respiratory chain NADH dehydrogenase (Complex I) which is composed of 45 different subunits.

It localises to the mitochondrion inner membrane. The enzyme catalyses a ubiquinone + NADH + 5 H(+)(in) = a ubiquinol + NAD(+) + 4 H(+)(out). Its function is as follows. Core subunit of the mitochondrial membrane respiratory chain NADH dehydrogenase (Complex I) which catalyzes electron transfer from NADH through the respiratory chain, using ubiquinone as an electron acceptor. Essential for the catalytic activity and assembly of complex I. This Osphranter robustus (Wallaroo) protein is NADH-ubiquinone oxidoreductase chain 6 (MT-ND6).